The sequence spans 342 residues: tRNA N6-adenosine threonylcarbamoyltransferase (342 aa).

The Fe cation site is built by H111 and H115. Substrate-binding positions include 133–137, D166, G179, D183, and N273; that span reads VVSGG. Residue D301 participates in Fe cation binding.

This sequence belongs to the KAE1 / TsaD family. Fe(2+) is required as a cofactor.

It localises to the cytoplasm. The catalysed reaction is L-threonylcarbamoyladenylate + adenosine(37) in tRNA = N(6)-L-threonylcarbamoyladenosine(37) in tRNA + AMP + H(+). Required for the formation of a threonylcarbamoyl group on adenosine at position 37 (t(6)A37) in tRNAs that read codons beginning with adenine. Is involved in the transfer of the threonylcarbamoyl moiety of threonylcarbamoyl-AMP (TC-AMP) to the N6 group of A37, together with TsaE and TsaB. TsaD likely plays a direct catalytic role in this reaction. The chain is tRNA N6-adenosine threonylcarbamoyltransferase from Trichlorobacter lovleyi (strain ATCC BAA-1151 / DSM 17278 / SZ) (Geobacter lovleyi).